Consider the following 101-residue polypeptide: Large ribosomal subunit protein uL24 (101 aa).

This sequence belongs to the universal ribosomal protein uL24 family. As to quaternary structure, part of the 50S ribosomal subunit.

Functionally, one of two assembly initiator proteins, it binds directly to the 5'-end of the 23S rRNA, where it nucleates assembly of the 50S subunit. Its function is as follows. One of the proteins that surrounds the polypeptide exit tunnel on the outside of the subunit. In Streptococcus thermophilus (strain CNRZ 1066), this protein is Large ribosomal subunit protein uL24.